Reading from the N-terminus, the 115-residue chain is Large ribosomal subunit protein uL24 (115 aa).

The protein belongs to the universal ribosomal protein uL24 family. In terms of assembly, part of the 50S ribosomal subunit.

Its function is as follows. One of two assembly initiator proteins, it binds directly to the 5'-end of the 23S rRNA, where it nucleates assembly of the 50S subunit. Functionally, one of the proteins that surrounds the polypeptide exit tunnel on the outside of the subunit. The protein is Large ribosomal subunit protein uL24 of Deinococcus deserti (strain DSM 17065 / CIP 109153 / LMG 22923 / VCD115).